The sequence spans 364 residues: Alanine racemase (364 aa).

The Proton acceptor; specific for D-alanine role is filled by K34. K34 bears the N6-(pyridoxal phosphate)lysine mark. R129 is a binding site for substrate. The Proton acceptor; specific for L-alanine role is filled by Y259. M307 contributes to the substrate binding site.

It belongs to the alanine racemase family. It depends on pyridoxal 5'-phosphate as a cofactor.

The catalysed reaction is L-alanine = D-alanine. It functions in the pathway amino-acid biosynthesis; D-alanine biosynthesis; D-alanine from L-alanine: step 1/1. Catalyzes the interconversion of L-alanine and D-alanine. May also act on other amino acids. This chain is Alanine racemase (alr), found in Coxiella burnetii (strain CbuK_Q154) (Coxiella burnetii (strain Q154)).